The following is a 445-amino-acid chain: Chromosomal replication initiator protein DnaA (445 aa).

The tract at residues 1–72 (MSGIDTIWEK…QEAFIEEIGE (72 aa)) is domain I, interacts with DnaA modulators. The domain II stretch occupies residues 72-107 (EKLNIKVISSEDELMNNEKEAPVRKTQQTSQELLPN). A domain III, AAA+ region region spans residues 108–324 (QLNTDNTFDT…GALTRVSAYS (217 aa)). Residues Gly-152, Gly-154, Lys-155, and Thr-156 each coordinate ATP. Residues 325-445 (KLVNRELNSD…LKNIEKDITS (121 aa)) form a domain IV, binds dsDNA region.

The protein belongs to the DnaA family. In terms of assembly, oligomerizes as a right-handed, spiral filament on DNA at oriC.

It localises to the cytoplasm. Plays an essential role in the initiation and regulation of chromosomal replication. ATP-DnaA binds to the origin of replication (oriC) to initiate formation of the DNA replication initiation complex once per cell cycle. Binds the DnaA box (a 9 base pair repeat at the origin) and separates the double-stranded (ds)DNA. Forms a right-handed helical filament on oriC DNA; dsDNA binds to the exterior of the filament while single-stranded (ss)DNA is stabiized in the filament's interior. The ATP-DnaA-oriC complex binds and stabilizes one strand of the AT-rich DNA unwinding element (DUE), permitting loading of DNA polymerase. After initiation quickly degrades to an ADP-DnaA complex that is not apt for DNA replication. Binds acidic phospholipids. The chain is Chromosomal replication initiator protein DnaA from Macrococcus caseolyticus (strain JCSC5402) (Macrococcoides caseolyticum).